Here is a 40-residue protein sequence, read N- to C-terminus: Ferredoxin-2 (40 aa).

A 2Fe-2S ferredoxin-type domain is found at 3 to 40 (YNIKLITPEGTKEITCSDSEYILDAAEEKGLDLPYSCR). C39 serves as a coordination point for [2Fe-2S] cluster.

This sequence belongs to the 2Fe2S plant-type ferredoxin family. [2Fe-2S] cluster serves as cofactor.

It localises to the plastid. The protein localises to the chloroplast. Its function is as follows. Ferredoxins are iron-sulfur proteins that transfer electrons in a wide variety of metabolic reactions. In Pisum sativum (Garden pea), this protein is Ferredoxin-2.